The primary structure comprises 76 residues: Nemertide alpha-1 (76 aa).

Residues 1-28 (YRIASSSIAKMKTAVFLVGLLFLGLVFA) form the signal peptide. The propeptide occupies 29 to 44 (DEAAIDSEFDQSIDKR). Cystine bridges form between C46–C60, C53–C64, and C59–C70. A 4-hydroxyproline mark is found at P72 and P73.

It belongs to the nemertide family. As to expression, confined to the epidermis and to the mucus layer.

The protein resides in the secreted. In terms of biological role, highly potent toxin against insect sodium channel (Nav) and with less potent activity against mammalian sodium channels. Potently inhibits inactivation of insect sodium channels of B.germanica (BgNav1) (EC(50)=8.6 nM), D.melanogaster (Dm Nav1), and arachnid sodium channel V.destructor (VdNav1). Also delays the inactivation of most mammalian Nav channels tested (human Nav1.1/SCN1A; EC(50)=124.1 nM, rat Nav1.2/SCN2A; EC(50)=359.6 nM, rat Nav1.3/SCN3A; EC(50)=135.4 nM, rat Nav1.4/SCN4A; EC(50)=145.5 nM, human Nav1.5/SCN5A; EC(50)=138.3 nM, mouse Nav1.6/SCN8A; EC(50)=240.4 nM, human Nav1.9/SCN9A; EC(50)=76.5 nM). 1 uM is enough to completely inhibits the inactivation, resulting in sustained non-inactivating currents. In addition, the toxin significantly enhances the recovery from inactivation, and the open state is not required for the toxin to interact with the channel. In vivo, injection into green crabs (Carcinus maenas at 1 mug/kg) of small doses (1-5 ug/kg) results in slow and fast permanent paralysis, whereas injection of high doses (more than 10 ug/kg) causes death. Injection into juvenile Blaptica dubia cockroaches results in death or permanent paralysis at doses higher than 7.1 ug/kg. Injection into brine shrimp (Artemia salina) stops movement or causes death after 24 hours (EC(50)=0.3 uM). In the rare inherited cardiac arrhythmia Brugada syndrome 1 (BRGDA1), this toxin is able to restore the loss of function by reducing channel inactivation, without affecting activation, by binding to Nav1.5/SCN5A. This Lineus lacteus (Ribbon worm) protein is Nemertide alpha-1.